Here is a 307-residue protein sequence, read N- to C-terminus: GTPase Era (307 aa).

The Era-type G domain maps to 7–181 (RCGWVALLGP…VKLVKSKLPV (175 aa)). A G1 region spans residues 15-22 (GPPNAGKS). Residue 15 to 22 (GPPNAGKS) coordinates GTP. The G2 stretch occupies residues 41-45 (QTTRN). A G3 region spans residues 62-65 (DTPG). GTP contacts are provided by residues 62 to 66 (DTPGI) and 130 to 133 (NKVD). Residues 130-133 (NKVD) form a G4 region. A G5 region spans residues 160 to 162 (VSA). The region spanning 212-290 (LRQELPYSVA…HLELWVKVRE (79 aa)) is the KH type-2 domain.

The protein belongs to the TRAFAC class TrmE-Era-EngA-EngB-Septin-like GTPase superfamily. Era GTPase family. Monomer.

It localises to the cytoplasm. It is found in the cell inner membrane. In terms of biological role, an essential GTPase that binds both GDP and GTP, with rapid nucleotide exchange. Plays a role in 16S rRNA processing and 30S ribosomal subunit biogenesis and possibly also in cell cycle regulation and energy metabolism. This is GTPase Era from Nitratidesulfovibrio vulgaris (strain DSM 19637 / Miyazaki F) (Desulfovibrio vulgaris).